A 578-amino-acid polypeptide reads, in one-letter code: Keratin, type II cytoskeletal 1b (578 aa).

The head stretch occupies residues M1 to Q163. R95 is subject to Omega-N-methylarginine. Positions E164–Q200 are coil 1A. The IF rod domain occupies E164–M477. The interval Q201 to I219 is linker 1. A coil 1B region spans residues G220 to Q311. Residues T312–I335 are linker 12. The interval D336–E474 is coil 2. The tail stretch occupies residues S475 to E578. R523 carries the omega-N-methylarginine modification. A compositionally biased stretch (gly residues) spans G547–G556. The segment at G547–E578 is disordered. Over residues V562–T571 the composition is skewed to polar residues.

The protein belongs to the intermediate filament family. Post-translationally, undergoes deimination of some arginine residues (citrullination). In terms of tissue distribution, expressed exclusively in skin.

This Homo sapiens (Human) protein is Keratin, type II cytoskeletal 1b (KRT77).